The following is a 32-amino-acid chain: Cyclotide glopa A (32 aa).

Positions 1–32 form a cross-link, cyclopeptide (Gly-Asn); the sequence is GGSIPCIETCVWTGCFLVPGCSCKSDKKCYLN. 3 cysteine pairs are disulfide-bonded: C6-C21, C10-C23, and C15-C29.

This is a cyclic peptide.

Functionally, probably participates in a plant defense mechanism. This is Cyclotide glopa A from Gloeospermum pauciflorum.